A 965-amino-acid chain; its full sequence is Isoleucine--tRNA ligase (965 aa).

The 'HIGH' region motif lies at 68–78; it reads PYANGSLHMGH. Glutamate 582 contacts L-isoleucyl-5'-AMP. Residues 623–627 carry the 'KMSKS' region motif; sequence KMSKS. Residue lysine 626 coordinates ATP. Zn(2+) contacts are provided by cysteine 936, cysteine 939, cysteine 956, and cysteine 959.

This sequence belongs to the class-I aminoacyl-tRNA synthetase family. IleS type 1 subfamily. In terms of assembly, monomer. It depends on Zn(2+) as a cofactor.

It localises to the cytoplasm. The enzyme catalyses tRNA(Ile) + L-isoleucine + ATP = L-isoleucyl-tRNA(Ile) + AMP + diphosphate. Catalyzes the attachment of isoleucine to tRNA(Ile). As IleRS can inadvertently accommodate and process structurally similar amino acids such as valine, to avoid such errors it has two additional distinct tRNA(Ile)-dependent editing activities. One activity is designated as 'pretransfer' editing and involves the hydrolysis of activated Val-AMP. The other activity is designated 'posttransfer' editing and involves deacylation of mischarged Val-tRNA(Ile). The chain is Isoleucine--tRNA ligase from Prochlorococcus marinus subsp. pastoris (strain CCMP1986 / NIES-2087 / MED4).